Reading from the N-terminus, the 458-residue chain is uncharacterized protein (458 aa).

Residues 5 to 65 form the TRAM domain; it reads QAPVNKNDVV…KGYGFGRVLN (61 aa). The [4Fe-4S] cluster site is built by C78, C84, C87, and C165. Residues Q289, Y318, E339, and D387 each contribute to the S-adenosyl-L-methionine site. C414 serves as the catalytic Nucleophile.

It belongs to the class I-like SAM-binding methyltransferase superfamily. RNA M5U methyltransferase family.

This is an uncharacterized protein from Halalkalibacterium halodurans (strain ATCC BAA-125 / DSM 18197 / FERM 7344 / JCM 9153 / C-125) (Bacillus halodurans).